Here is an 861-residue protein sequence, read N- to C-terminus: Leucine--tRNA ligase (861 aa).

The 'HIGH' region motif lies at 42–52 (PYPSGRLHMGH). A 'KMSKS' region motif is present at residues 619-623 (KMSKS). Residue Lys622 coordinates ATP.

The protein belongs to the class-I aminoacyl-tRNA synthetase family.

It localises to the cytoplasm. The enzyme catalyses tRNA(Leu) + L-leucine + ATP = L-leucyl-tRNA(Leu) + AMP + diphosphate. This is Leucine--tRNA ligase from Haemophilus ducreyi (strain 35000HP / ATCC 700724).